A 256-amino-acid polypeptide reads, in one-letter code: Floral homeotic protein APETALA 1 (256 aa).

An MADS-box domain is found at 1 to 61; that stretch reads MGRGRVQLKR…GKLFEYSTDS (61 aa). A K-box domain is found at 88 to 178; the sequence is NTNWSMEYNR…SKQIKEREKV (91 aa). A disordered region spans residues 180 to 206; it reads RAQQEQWDQQNHGQNMPPPPPPQEHQI.

As to quaternary structure, homodimer capable of binding to CArG-box sequences.

Its subcellular location is the nucleus. Its function is as follows. Transcription factor that promotes early floral meristem identity in synergy with LEAFY. Displays a redundant function with CAULIFLOWER in the up-regulation of LEAFY. Required subsequently for the transition of an inflorescence meristem into a floral meristem, and for the normal development of sepals and petals in flowers. Regulates positively B class homeotic proteins. The sequence is that of Floral homeotic protein APETALA 1 (AP1) from Brassica rapa subsp. pekinensis (Chinese cabbage).